The sequence spans 436 residues: O-phosphoseryl-tRNA(Sec) selenium transferase (436 aa).

The interval 1–44 (MLDFNIEGLIPKNMEKRGELVLNEYLKEIEDVFNHRKIPENGID) is tetramerization. Arg-72 is a binding site for pyridoxal 5'-phosphate. The segment at 93 to 103 (GRSGNLVDPQP) is phosphate loop (P-loop). Residues Arg-94, Ser-95, and Gln-102 each contribute to the substrate site. Lys-278 carries the N6-(pyridoxal phosphate)lysine modification. Position 307 (Arg-307) interacts with substrate.

It belongs to the SepSecS family. Homotetramer. It depends on pyridoxal 5'-phosphate as a cofactor.

It carries out the reaction O-phospho-L-seryl-tRNA(Sec) + selenophosphate + H2O = L-selenocysteinyl-tRNA(Sec) + 2 phosphate. The protein operates within aminoacyl-tRNA biosynthesis; selenocysteinyl-tRNA(Sec) biosynthesis; selenocysteinyl-tRNA(Sec) from L-seryl-tRNA(Sec) (archaeal/eukaryal route): step 2/2. Converts O-phosphoseryl-tRNA(Sec) to selenocysteinyl-tRNA(Sec) required for selenoprotein biosynthesis. This chain is O-phosphoseryl-tRNA(Sec) selenium transferase (spcS), found in Methanococcus maripaludis (strain DSM 14266 / JCM 13030 / NBRC 101832 / S2 / LL).